We begin with the raw amino-acid sequence, 693 residues long: Elongation factor G (693 aa).

Residues 8–282 form the tr-type G domain; that stretch reads EKTRNIGIMA…AVIDYLPSPL (275 aa). Residues 17–24, 81–85, and 135–138 each bind GTP; these read AHIDAGKT, DTPGH, and NKMD.

This sequence belongs to the TRAFAC class translation factor GTPase superfamily. Classic translation factor GTPase family. EF-G/EF-2 subfamily.

It is found in the cytoplasm. Catalyzes the GTP-dependent ribosomal translocation step during translation elongation. During this step, the ribosome changes from the pre-translocational (PRE) to the post-translocational (POST) state as the newly formed A-site-bound peptidyl-tRNA and P-site-bound deacylated tRNA move to the P and E sites, respectively. Catalyzes the coordinated movement of the two tRNA molecules, the mRNA and conformational changes in the ribosome. This Staphylococcus carnosus (strain TM300) protein is Elongation factor G.